A 180-amino-acid polypeptide reads, in one-letter code: Molybdopterin synthase catalytic subunit (180 aa).

Substrate-binding positions include 123–124 (HR), lysine 139, and 146–148 (KLE). The segment at 161 to 180 (RDGQKGVKVEGGKEGVEAKH) is disordered.

This sequence belongs to the MoaE family. MOCS2B subfamily. In terms of assembly, heterotetramer; composed of 2 small (MOCS2A) and 2 large (MOCS2B) subunits.

It localises to the cytoplasm. The enzyme catalyses 2 [molybdopterin-synthase sulfur-carrier protein]-C-terminal-Gly-aminoethanethioate + cyclic pyranopterin phosphate + H2O = molybdopterin + 2 [molybdopterin-synthase sulfur-carrier protein]-C-terminal Gly-Gly + 2 H(+). It functions in the pathway cofactor biosynthesis; molybdopterin biosynthesis. Its function is as follows. Catalytic subunit of the molybdopterin synthase complex, a complex that catalyzes the conversion of precursor Z into molybdopterin. Acts by mediating the incorporation of 2 sulfur atoms from thiocarboxylated MOCS2A into precursor Z to generate a dithiolene group. This is Molybdopterin synthase catalytic subunit from Pyrenophora tritici-repentis (strain Pt-1C-BFP) (Wheat tan spot fungus).